The sequence spans 344 residues: Phenylalanine--tRNA ligase alpha subunit (344 aa).

Glutamate 259 provides a ligand contact to Mg(2+).

The protein belongs to the class-II aminoacyl-tRNA synthetase family. Phe-tRNA synthetase alpha subunit type 1 subfamily. As to quaternary structure, tetramer of two alpha and two beta subunits. Requires Mg(2+) as cofactor.

The protein localises to the cytoplasm. It carries out the reaction tRNA(Phe) + L-phenylalanine + ATP = L-phenylalanyl-tRNA(Phe) + AMP + diphosphate + H(+). This Nitrosospira multiformis (strain ATCC 25196 / NCIMB 11849 / C 71) protein is Phenylalanine--tRNA ligase alpha subunit.